The chain runs to 215 residues: Late embryogenesis abundant protein 14 (215 aa).

Disordered regions lie at residues 1–129 and 190–215; these read MASQ…GQTG and SGDN…SDYQ. 4 stretches are compositionally biased toward basic and acidic residues: residues 13–24, 32–41, 54–81, and 88–111; these read GETKARAEEKTG, EKAREAKDTA, GAKE…KDAA, and AMDK…DRAA. The segment covering 192–215 has biased composition (polar residues); the sequence is DNKNNAAAGKDTSTYKPGTGSDYQ.

The protein belongs to the LEA type 4 family. In terms of tissue distribution, expressed in the shoot apex and leaves. Expressed in dry seeds. Expressed in roots and leaves.

The protein resides in the nucleus. The protein is Late embryogenesis abundant protein 14 of Oryza sativa subsp. japonica (Rice).